Here is a 359-residue protein sequence, read N- to C-terminus: UDP-3-O-acylglucosamine N-acyltransferase (359 aa).

H253 acts as the Proton acceptor in catalysis.

The protein belongs to the transferase hexapeptide repeat family. LpxD subfamily. Homotrimer.

The enzyme catalyses a UDP-3-O-[(3R)-3-hydroxyacyl]-alpha-D-glucosamine + a (3R)-hydroxyacyl-[ACP] = a UDP-2-N,3-O-bis[(3R)-3-hydroxyacyl]-alpha-D-glucosamine + holo-[ACP] + H(+). It participates in bacterial outer membrane biogenesis; LPS lipid A biosynthesis. Catalyzes the N-acylation of UDP-3-O-acylglucosamine using 3-hydroxyacyl-ACP as the acyl donor. Is involved in the biosynthesis of lipid A, a phosphorylated glycolipid that anchors the lipopolysaccharide to the outer membrane of the cell. The chain is UDP-3-O-acylglucosamine N-acyltransferase from Burkholderia cenocepacia (strain ATCC BAA-245 / DSM 16553 / LMG 16656 / NCTC 13227 / J2315 / CF5610) (Burkholderia cepacia (strain J2315)).